The primary structure comprises 710 residues: Bifunctional lysine-specific demethylase and histidyl-hydroxylase NO66 (710 aa).

The interval 103-137 (TDEMNKTKKKQKKIMKKEIRKRTKRKRKSVNKREL) is disordered. Over residues 109-132 (TKKKQKKIMKKEIRKRTKRKRKSV) the composition is skewed to basic residues. Residues 359–506 (CSIQLTNPQS…DLLERVIPPA (148 aa)) form the JmjC domain. Fe cation is bound by residues His-405, Asp-407, and His-472.

The protein belongs to the ROX family. NO66 subfamily. Fe(2+) is required as a cofactor.

The protein localises to the nucleus. The enzyme catalyses N(6),N(6)-dimethyl-L-lysyl(36)-[histone H3] + 2 2-oxoglutarate + 2 O2 = L-lysyl(36)-[histone H3] + 2 formaldehyde + 2 succinate + 2 CO2. Functionally, oxygenase that can act as both a histone lysine demethylase and a ribosomal histidine hydroxylase. Specifically demethylates 'Lys-4' (H3K4me) and 'Lys-36' (H3K36me) of histone H3, thereby playing a central role in histone code. This is Bifunctional lysine-specific demethylase and histidyl-hydroxylase NO66 from Brugia malayi (Filarial nematode worm).